Here is a 603-residue protein sequence, read N- to C-terminus: Sulfoacetaldehyde acetyltransferase (603 aa).

Belongs to the TPP enzyme family. Mg(2+) is required as a cofactor. The cofactor is thiamine diphosphate.

The catalysed reaction is acetyl phosphate + sulfite + H(+) = sulfoacetaldehyde + phosphate. Catalyzes the degradation of sulfoacetaldehyde into sulfite and acetyl phosphate. Involved in sulfolactate degradation. This Roseovarius nubinhibens (strain ATCC BAA-591 / DSM 15170 / ISM) protein is Sulfoacetaldehyde acetyltransferase.